Here is a 92-residue protein sequence, read N- to C-terminus: DNA-directed RNA polymerase subunit omega (92 aa).

Belongs to the RNA polymerase subunit omega family. The RNAP catalytic core consists of 2 alpha, 1 beta, 1 beta' and 1 omega subunit. When a sigma factor is associated with the core the holoenzyme is formed, which can initiate transcription.

It carries out the reaction RNA(n) + a ribonucleoside 5'-triphosphate = RNA(n+1) + diphosphate. Promotes RNA polymerase assembly. Latches the N- and C-terminal regions of the beta' subunit thereby facilitating its interaction with the beta and alpha subunits. The chain is DNA-directed RNA polymerase subunit omega from Corynebacterium diphtheriae (strain ATCC 700971 / NCTC 13129 / Biotype gravis).